Consider the following 336-residue polypeptide: uncharacterized protein (336 aa).

The segment covering 297–316 has biased composition (basic and acidic residues); that stretch reads KKDLQKSEEEEHPNDDHVYM. Residues 297 to 336 are disordered; sequence KKDLQKSEEEEHPNDDHVYMTEEDDMEKIERGIESLGNGH.

This is an uncharacterized protein from Invertebrate iridescent virus 6 (IIV-6).